The primary structure comprises 451 residues: Ribulose bisphosphate carboxylase large chain (451 aa).

Residue K5 is modified to N6,N6,N6-trimethyllysine. Residues N114 and T164 each coordinate substrate. K166 (proton acceptor) is an active-site residue. Substrate is bound at residue K168. K192, D194, and E195 together coordinate Mg(2+). K192 is modified (N6-carboxylysine). The active-site Proton acceptor is H285. Substrate is bound by residues R286, H318, and S370.

The protein belongs to the RuBisCO large chain family. Type I subfamily. In terms of assembly, heterohexadecamer of 8 large chains and 8 small chains; disulfide-linked. The disulfide link is formed within the large subunit homodimers. It depends on Mg(2+) as a cofactor. The disulfide bond which can form in the large chain dimeric partners within the hexadecamer appears to be associated with oxidative stress and protein turnover.

It is found in the plastid. Its subcellular location is the chloroplast. It carries out the reaction 2 (2R)-3-phosphoglycerate + 2 H(+) = D-ribulose 1,5-bisphosphate + CO2 + H2O. It catalyses the reaction D-ribulose 1,5-bisphosphate + O2 = 2-phosphoglycolate + (2R)-3-phosphoglycerate + 2 H(+). Functionally, ruBisCO catalyzes two reactions: the carboxylation of D-ribulose 1,5-bisphosphate, the primary event in carbon dioxide fixation, as well as the oxidative fragmentation of the pentose substrate in the photorespiration process. Both reactions occur simultaneously and in competition at the same active site. The polypeptide is Ribulose bisphosphate carboxylase large chain (Aristea glauca).